A 229-amino-acid chain; its full sequence is Protein fmp52-2, mitochondrial (229 aa).

Residues 1-44 constitute a mitochondrion transit peptide; the sequence is MTAAAVFGCTGAVGSQILATLLASDAFSSVATVSRKLPTAESPK.

This sequence belongs to the FMP52 family.

It is found in the mitochondrion outer membrane. The chain is Protein fmp52-2, mitochondrial (fmp522) from Aspergillus terreus (strain NIH 2624 / FGSC A1156).